The following is a 725-amino-acid chain: Beta-adducin (725 aa).

The tract at residues 1–22 (MSEDTVPEAASPPPSQGQHYFD) is disordered. 2 positions are modified to phosphoserine: Ser11 and Ser25. The residue at position 55 (Thr55) is a Phosphothreonine. 2 positions are modified to phosphoserine: Ser60 and Ser344. The tract at residues 425–444 (KQQKEKTRWLNTPNTYLRVN) is interaction with calmodulin. Residues 525–725 (AEKSRSPSTE…KSKKKEKVES (201 aa)) form a disordered region. 2 positions are modified to phosphoserine: Ser530 and Ser532. Thr533 is modified (phosphothreonine). Ser535 bears the Phosphoserine mark. At Thr561 the chain carries Phosphothreonine. Over residues 566 to 588 (EEYKKEVERKKLEQEQEGEKDAA) the composition is skewed to basic and acidic residues. Residues Ser594, Ser598, Ser602, and Ser606 each carry the phosphoserine modification. Polar residues predominate over residues 596-621 (VKSTPASPVQSPTRAGTKSPAVSPSK). Thr612 is subject to Phosphothreonine. Ser614, Ser618, and Ser620 each carry phosphoserine. Basic and acidic residues-rich tracts occupy residues 622–631 (ASEDAKKTEV) and 639–654 (EPEKPEGVVVNGKEEE). Thr674 carries the post-translational modification Phosphothreonine. A phosphoserine mark is found at Ser678, Ser685, Ser688, Ser692, Ser696, Ser698, Ser700, Ser702, and Ser712. The span at 687–700 (TSGPLSPEGSPSKS) shows a compositional bias: low complexity. Residues 701–725 (PSKKKKKFRTPSFLKKSKKKEKVES) are compositionally biased toward basic residues. Positions 703-720 (KKKKKFRTPSFLKKSKKK) are interaction with calmodulin.

This sequence belongs to the aldolase class II family. Adducin subfamily. Heterodimer of an alpha and a beta subunit. Found in a complex with ADD2, DMTN and SLC2A1. Interacts with SLC2A1. As to expression, found in liver, kidney, spleen, heart and brain.

It localises to the cytoplasm. Its subcellular location is the cytoskeleton. The protein localises to the cell membrane. Its function is as follows. Membrane-cytoskeleton-associated protein that promotes the assembly of the spectrin-actin network. Binds to the erythrocyte membrane receptor SLC2A1/GLUT1 and may therefore provide a link between the spectrin cytoskeleton to the plasma membrane. Binds to calmodulin. Calmodulin binds preferentially to the beta subunit. The sequence is that of Beta-adducin (Add2) from Rattus norvegicus (Rat).